Reading from the N-terminus, the 673-residue chain is UvrABC system protein B (673 aa).

Positions 26-414 (EGLEDGLAHQ…GGDVVDQVVR (389 aa)) constitute a Helicase ATP-binding domain. ATP is bound at residue 39–46 (GVTGSGKT). A Beta-hairpin motif is present at residues 92–115 (YYDYYQPEAYVPSSDTFIEKDASV). The 167-residue stretch at 431-597 (QVDDLLSEIR…GLNKKVVDIL (167 aa)) folds into the Helicase C-terminal domain. The 36-residue stretch at 633–668 (LQKIHELEGLMMQHAQNLEFEEAAQIRDQLHQLREL) folds into the UVR domain.

Belongs to the UvrB family. Forms a heterotetramer with UvrA during the search for lesions. Interacts with UvrC in an incision complex.

The protein localises to the cytoplasm. Functionally, the UvrABC repair system catalyzes the recognition and processing of DNA lesions. A damage recognition complex composed of 2 UvrA and 2 UvrB subunits scans DNA for abnormalities. Upon binding of the UvrA(2)B(2) complex to a putative damaged site, the DNA wraps around one UvrB monomer. DNA wrap is dependent on ATP binding by UvrB and probably causes local melting of the DNA helix, facilitating insertion of UvrB beta-hairpin between the DNA strands. Then UvrB probes one DNA strand for the presence of a lesion. If a lesion is found the UvrA subunits dissociate and the UvrB-DNA preincision complex is formed. This complex is subsequently bound by UvrC and the second UvrB is released. If no lesion is found, the DNA wraps around the other UvrB subunit that will check the other stand for damage. This is UvrABC system protein B from Shigella dysenteriae serotype 1 (strain Sd197).